We begin with the raw amino-acid sequence, 176 residues long: Sigma intracellular receptor 2 (176 aa).

Topologically, residues 1–9 (MGALAARRC) are cytoplasmic. Residues 10–30 (VEWLLGLYFVSHIPITLFIDL) form a helical membrane-spanning segment. The EXPERA domain occupies 10–158 (VEWLLGLYFV…PYLIIPLILL (149 aa)). The Lumenal segment spans residues 31–68 (QAVLPPELYPQEFSNLLRWYSKEFKDPLMQEPPVWFKS). The helical transmembrane segment at 69–89 (FLLCELVFQLPFFPIAAYAFF) threads the bilayer. Val75 and Gln77 together coordinate cholesterol. Residues 90-99 (KGSCRWIRIP) are Cytoplasmic-facing. The chain crosses the membrane as a helical span at residues 100 to 120 (AIIYAAHTITTLIPILYTLLF). Residues 121–140 (EDFSKAVAFKGQRPESFRER) lie on the Lumenal side of the membrane. A helical transmembrane segment spans residues 141 to 161 (LTLVGVYAPYLIIPLILLLFM). The Cytoplasmic portion of the chain corresponds to 162-176 (LRNPYYKYEEKRKKK). The short motif at 172–176 (KRKKK) is the ER retention motif element.

The protein belongs to the TMEM97/sigma-2 receptor family. In terms of assembly, homodimer. Interacts with NPC1; the interaction impairs NPC1-mediated cholesterol transport. Interacts with PGRMC1 and LDLR; the interaction increases LDL internalization. Interacts with histatin 1/HTN1; the interaction induces HTN1-stimulating wound healing. Interacts with TSPO.

The protein localises to the rough endoplasmic reticulum membrane. The protein resides in the nucleus membrane. Functionally, sigma-2 receptor which contributes to ameliorate dysfunctional cellular processes and slow degenerative progression by regulating cell functions including cholesterol biosynthesis/trafficking, membrane trafficking, autophagy, lipid membrane-bound protein trafficking, and receptor stabilization at the cell surface. Forms a ternary complex with PGRMC1 receptor and low density lipoprotein receptor/LDLR at the plasma membrane, which increases LDLR-mediated LDL cholesterol internalization. Decreases lysosomal sterol transporter NPC1 availability to the cell, probably through NPC1-binding, hence controlling lipid transport, including cholesterol and LBPA, outside of late endosome/lysosome. Binds regio- and stereoselective ligand 20(S)-hydroxycholesterol (20(S)-OHC) which enhances TMEM97-NPC1 interaction and decreases TMEM97-PGRMC1 and TMEM97-TSPO interactions, thereby linking OHC binding to cholesterol homeostasis. Also able to bind cholesterol. Binds histatin 1 (Hst 1)/HN1 salivary peptide at the ER membrane, which is critical for increasing mitochondria-ER contacts and stimulating Hst1 wound healing properties. May alter the activity of some cytochrome P450 proteins. Although shows homologies with sterol isomerases (EXPERA domain), not able to catalyze sterol isomerization. However, may act as sensors of these molecules. Acts as a quality control factor in the ER, promoting the proteolytic degradation of nonproductive and extramitochondrial precursor proteins in the ER membrane thus removing them from the ER surface. The protein is Sigma intracellular receptor 2 of Mus musculus (Mouse).